Consider the following 218-residue polypeptide: Ribose-5-phosphate isomerase A (218 aa).

Substrate contacts are provided by residues 28 to 31 (TGST), 81 to 84 (DGAD), and 94 to 97 (KGGG). The active-site Proton acceptor is the glutamate 103. Residue lysine 121 coordinates substrate.

Belongs to the ribose 5-phosphate isomerase family. In terms of assembly, homodimer.

It carries out the reaction aldehydo-D-ribose 5-phosphate = D-ribulose 5-phosphate. It participates in carbohydrate degradation; pentose phosphate pathway; D-ribose 5-phosphate from D-ribulose 5-phosphate (non-oxidative stage): step 1/1. Functionally, catalyzes the reversible conversion of ribose-5-phosphate to ribulose 5-phosphate. The protein is Ribose-5-phosphate isomerase A of Sodalis glossinidius (strain morsitans).